A 34-amino-acid chain; its full sequence is Protamine (34 aa).

The interval 1 to 34 (PRRRRQASRPVRRRRRTRRSTAERRRRRVVRRRR) is disordered.

In terms of tissue distribution, testis.

It is found in the nucleus. It localises to the chromosome. In terms of biological role, protamines substitute for histones in the chromatin of sperm during the haploid phase of spermatogenesis. They compact sperm DNA into a highly condensed, stable and inactive complex. The polypeptide is Protamine (Dicentrarchus labrax (European seabass)).